The following is a 159-amino-acid chain: Putative 4-hydroxy-4-methyl-2-oxoglutarate aldolase (159 aa).

Substrate contacts are provided by residues 78–81 (GDVI) and Arg-100. A divalent metal cation is bound at residue Asp-101.

It belongs to the class II aldolase/RraA-like family. Homotrimer. A divalent metal cation serves as cofactor.

It carries out the reaction 4-hydroxy-4-methyl-2-oxoglutarate = 2 pyruvate. The catalysed reaction is oxaloacetate + H(+) = pyruvate + CO2. Functionally, catalyzes the aldol cleavage of 4-hydroxy-4-methyl-2-oxoglutarate (HMG) into 2 molecules of pyruvate. Also contains a secondary oxaloacetate (OAA) decarboxylase activity due to the common pyruvate enolate transition state formed following C-C bond cleavage in the retro-aldol and decarboxylation reactions. The sequence is that of Putative 4-hydroxy-4-methyl-2-oxoglutarate aldolase from Mycobacterium sp. (strain JLS).